We begin with the raw amino-acid sequence, 126 residues long: MAGEAVSEHTPDSQEVTVTSVVCCLDSVVEIGHHVVYSVVTPLIVAVLIDTMAGEAVLEHTSDSQEEIVTTVVCSVVPLVCFVVSVVCFVISVVEIGHHVVYSVVAPLTVTVAVETIAEEMDSVHT.

At 1–28 (MAGEAVSEHTPDSQEVTVTSVVCCLDSV) the chain is on the cytoplasmic side. The chain crosses the membrane as a helical span at residues 29–49 (VEIGHHVVYSVVTPLIVAVLI). At 50-75 (DTMAGEAVLEHTSDSQEEIVTTVVCS) the chain is on the extracellular side. Residues 76 to 96 (VVPLVCFVVSVVCFVISVVEI) form a helical membrane-spanning segment. Position 97 (Gly-97) is a topological domain, cytoplasmic. Residues 98–118 (HHVVYSVVAPLTVTVAVETIA) form a helical membrane-spanning segment. Topologically, residues 119–126 (EEMDSVHT) are extracellular.

It is found in the membrane. This is an uncharacterized protein from Saccharomyces cerevisiae (strain ATCC 204508 / S288c) (Baker's yeast).